Consider the following 191-residue polypeptide: C-type lectin domain family 2 member D (191 aa).

At 1–38 (MHDSNNVEKDITPSELPANPGCLHSKEHSIKATLIWRL) the chain is on the cytoplasmic side. Residues 39-59 (FFLIMFLTIIVCGMVAALSAI) traverse the membrane as a helical; Signal-anchor for type II membrane protein segment. The Extracellular portion of the chain corresponds to 60-191 (RANCHQEPSV…WICSKSDIHV (132 aa)). Residues C75 and C86 are joined by a disulfide bond. Positions 82–185 (FQRKCFYFSD…HYTERKWICS (104 aa)) constitute a C-type lectin domain. N-linked (GlcNAc...) asparagine glycosylation is found at N95 and N147. C103 and C184 are oxidised to a cystine.

As to quaternary structure, homodimer; disulfide-linked. Post-translationally, N-glycosylated. Detected in peripheral blood leukocytes, osteoblasts, lymph node, thymus and spleen. Isoform 1, isoform 2 and isoform 4 are expressed in T- and B-lymphocytes, and at lower levels in NK cells. They are also expressed in B-cell lines and LPS-matured monocyte-derived dendritic cells.

The protein localises to the cell membrane. Its subcellular location is the endoplasmic reticulum. In terms of biological role, receptor for KLRB1 that protects target cells against natural killer cell-mediated lysis. Inhibits osteoclast formation. Inhibits bone resorption. Modulates the release of interferon-gamma. Binds high molecular weight sulfated glycosaminoglycans. The chain is C-type lectin domain family 2 member D (CLEC2D) from Homo sapiens (Human).